The chain runs to 58 residues: Small ribosomal subunit protein bS21B (58 aa).

This sequence belongs to the bacterial ribosomal protein bS21 family.

The sequence is that of Small ribosomal subunit protein bS21B (rpsU2) from Nostoc sp. (strain PCC 7120 / SAG 25.82 / UTEX 2576).